The chain runs to 406 residues: Putative phosphate permease PH0640 (406 aa).

The next 11 membrane-spanning stretches (helical) occupy residues 2-22 (IPID…AWAI), 45-65 (AVLI…KTVT), 83-103 (VLIY…IIAT), 114-134 (SIIG…IVNW), 140-160 (VVLS…LVFR), 182-202 (FWIG…VLHG), 207-227 (IGIL…TSML), 265-285 (VANA…GLAG), 288-308 (VPVP…GVAT), 330-350 (FTID…GMPI), and 385-405 (FVTV…LLLI).

Belongs to the inorganic phosphate transporter (PiT) (TC 2.A.20) family.

The protein localises to the cell membrane. Potential transporter for phosphate. In Pyrococcus horikoshii (strain ATCC 700860 / DSM 12428 / JCM 9974 / NBRC 100139 / OT-3), this protein is Putative phosphate permease PH0640.